The chain runs to 343 residues: MTDVTTIHQPVLLRDCVDLVAPALAKPGSIAVDCTLGLAGHSTAFLKASPNARLIGIDRDTEALALATKRMEMEGLADRFTPVHAAFDDFSQVLSDQGVDKVNAVFMDLGLSSLQIDETERGFSYSHDAPLDMRMDVTQPLTAEQVLAEYSFADLVRIFRAYGEERFSKQIAREIVRRRETEPLTTSGQLNRLVDEVVPQAHRPAGNPAKRVFQALRIEVNGELDKLAGTLPQIANHLAVGGRLVVESYHSLEDKTVKAFMNQGLKVDAPADMPVVPPDMMPFFKELTRGAIKADAEEIANNPRSASVRLRAVELTRPIPARWRKRFDQGADYASMTRQGRRD.

Residues Ala39–His41, Asp58, Phe87, Asp108, and Gln115 contribute to the S-adenosyl-L-methionine site.

The protein belongs to the methyltransferase superfamily. RsmH family.

The protein localises to the cytoplasm. The enzyme catalyses cytidine(1402) in 16S rRNA + S-adenosyl-L-methionine = N(4)-methylcytidine(1402) in 16S rRNA + S-adenosyl-L-homocysteine + H(+). Its function is as follows. Specifically methylates the N4 position of cytidine in position 1402 (C1402) of 16S rRNA. This chain is Ribosomal RNA small subunit methyltransferase H, found in Bifidobacterium adolescentis (strain ATCC 15703 / DSM 20083 / NCTC 11814 / E194a).